An 87-amino-acid polypeptide reads, in one-letter code: MINSKIIILNNNKVIYYKPQNITLISILEKNDIILDSQCKQGYCGSCRIKLLKGHVYYKNIFPLASCKPKDIFPCCCTISGSILIKI.

The 2Fe-2S ferredoxin-type domain maps to 4 to 87 (SKIIILNNNK…TISGSILIKI (84 aa)). [2Fe-2S] cluster is bound by residues Cys39, Cys44, Cys47, and Cys75.

[2Fe-2S] cluster serves as cofactor.

This is an uncharacterized protein from Buchnera aphidicola subsp. Baizongia pistaciae (strain Bp).